Consider the following 208-residue polypeptide: Probable transcriptional regulator ycf29 (208 aa).

Residues 11–118 enclose the Response regulatory domain; the sequence is KLILIEPEEH…ELIAIISNLI (108 aa). D60 carries the 4-aspartylphosphate modification. Residues 146-208 enclose the HTH luxR-type domain; that stretch reads TSFSYINLTV…NRIQILSYFN (63 aa).

The protein localises to the plastid. It is found in the chloroplast. This Guillardia theta (Cryptophyte) protein is Probable transcriptional regulator ycf29 (ycf29).